Consider the following 240-residue polypeptide: Uridylate kinase (240 aa).

13 to 16 (KFSG) contributes to the ATP binding site. Position 55 (Gly55) interacts with UMP. ATP contacts are provided by Gly56 and Arg60. UMP-binding positions include Asp76 and 137 to 144 (TGNPFFTT). The ATP site is built by Thr164, Tyr170, and Asp173.

It belongs to the UMP kinase family. Homohexamer.

The protein resides in the cytoplasm. It catalyses the reaction UMP + ATP = UDP + ADP. The protein operates within pyrimidine metabolism; CTP biosynthesis via de novo pathway; UDP from UMP (UMPK route): step 1/1. Inhibited by UTP. Catalyzes the reversible phosphorylation of UMP to UDP. This is Uridylate kinase from Helicobacter pylori (strain ATCC 700392 / 26695) (Campylobacter pylori).